Here is a 370-residue protein sequence, read N- to C-terminus: 3-dehydroquinate synthase (370 aa).

NAD(+) contacts are provided by residues 112–116, 136–137, K149, K158, and 176–179; these read GVIGD, TT, and TLAT. Positions 191, 254, and 276 each coordinate Zn(2+).

Belongs to the sugar phosphate cyclases superfamily. Dehydroquinate synthase family. Co(2+) serves as cofactor. Requires Zn(2+) as cofactor. The cofactor is NAD(+).

The protein localises to the cytoplasm. The catalysed reaction is 7-phospho-2-dehydro-3-deoxy-D-arabino-heptonate = 3-dehydroquinate + phosphate. The protein operates within metabolic intermediate biosynthesis; chorismate biosynthesis; chorismate from D-erythrose 4-phosphate and phosphoenolpyruvate: step 2/7. In terms of biological role, catalyzes the conversion of 3-deoxy-D-arabino-heptulosonate 7-phosphate (DAHP) to dehydroquinate (DHQ). This Xylella fastidiosa (strain M23) protein is 3-dehydroquinate synthase.